Here is a 243-residue protein sequence, read N- to C-terminus: GTP cyclohydrolase 1 (243 aa).

Thr-15 carries the post-translational modification Phosphothreonine. The disordered stretch occupies residues 18–55 (NIRPTSPYTLNPPVERDGFSWPSVGTRQRAEETEEEEK). Ser-23 is subject to Phosphoserine. Zn(2+)-binding residues include Cys-132, His-135, and Cys-203.

This sequence belongs to the GTP cyclohydrolase I family. In terms of assembly, homodimer.

The catalysed reaction is GTP + H2O = 7,8-dihydroneopterin 3'-triphosphate + formate + H(+). It functions in the pathway cofactor biosynthesis; 7,8-dihydroneopterin triphosphate biosynthesis; 7,8-dihydroneopterin triphosphate from GTP: step 1/1. Its function is as follows. GTP cyclohydrolase 1 is the first enzyme in the biosynthetic pathway leading to folic acid. This Saccharomyces cerevisiae (strain ATCC 204508 / S288c) (Baker's yeast) protein is GTP cyclohydrolase 1.